A 59-amino-acid chain; its full sequence is U17-myrmicitoxin-Tb1f (59 aa).

A signal peptide spans 1–27 (MEKNRTTTFSVYLTIILFLISTFITMV). Positions 28–31 (ITES) are excised as a propeptide. Histidine amide is present on histidine 58.

As to expression, expressed by the venom gland.

It localises to the secreted. This is U17-myrmicitoxin-Tb1f from Tetramorium bicarinatum (Tramp ant).